The sequence spans 411 residues: Bestrophin homolog 26 (411 aa).

4 helical membrane passes run 30-50 (FTAI…FMVI), 73-93 (SHQE…SSVV), 235-255 (IPIP…YFAV), and 272-292 (TWIT…MGWM).

Belongs to the anion channel-forming bestrophin (TC 1.A.46) family. Calcium-sensitive chloride channel subfamily. In terms of assembly, forms oligomers.

Its subcellular location is the cell membrane. Its function is as follows. Forms chloride channels. The polypeptide is Bestrophin homolog 26 (best-26) (Caenorhabditis elegans).